Here is a 662-residue protein sequence, read N- to C-terminus: Methyl-accepting chemotaxis protein TlpA (662 aa).

The Cytoplasmic portion of the chain corresponds to 1–16; that stretch reads MKKTLTTIRRSSIARR. Residues 17 to 37 traverse the membrane as a helical segment; that stretch reads LIISFLLILIVPITALSVSAY. Residues 38–281 lie on the Extracellular side of the membrane; sequence QSAVASLDVQ…IHDAASRVLI (244 aa). Positions 152–228 constitute a Cache domain; the sequence is VTEPYESISS…KAGTELKGDW (77 aa). Residues 282–302 traverse the membrane as a helical segment; that stretch reads MASIVLAIAIGAGMTAIYFVI. The 53-residue stretch at 303 to 355 folds into the HAMP domain; that stretch reads RSITKPLRRIVASAEKISEGDLTETIEINSKDELGVLSESFNHMAHSLRSLIH. The Cytoplasmic segment spans residues 303–662; sequence RSITKPLRRI…DLTKQFKVDK (360 aa). A glutamate methyl ester (Glu) mark is found at glutamate 370, glutamate 594, glutamate 629, and glutamate 636. The Methyl-accepting transducer domain occupies 374–610; that stretch reads SADQTSRATE…EISAASNDIT (237 aa).

This sequence belongs to the methyl-accepting chemotaxis (MCP) protein family. In terms of assembly, interacts with YabA.

The protein resides in the cell membrane. Functionally, chemotactic-signal transducers respond to changes in the concentration of attractants and repellents in the environment, transduce a signal from the outside to the inside of the cell, and facilitate sensory adaptation through the variation of the level of methylation. All amino acids serve as attractants in B.subtilis, they appear to cause an increase in the turnover methyl groups, leading to methylation of an unidentified acceptor, while repellents have been shown to cause a decrease in methyl group turnover. The methyl groups are added by a methyltransferase and removed by a methylesterase. The chain is Methyl-accepting chemotaxis protein TlpA from Bacillus subtilis (strain 168).